The chain runs to 166 residues: Transcription antitermination protein NusB (166 aa).

Residues 1–15 (MISDDSDRFNPRDPK) show a composition bias toward basic and acidic residues. Residues 1-30 (MISDDSDRFNPRDPKPANAGKPSKSAKRRE) form a disordered region.

Belongs to the NusB family.

Functionally, involved in transcription antitermination. Required for transcription of ribosomal RNA (rRNA) genes. Binds specifically to the boxA antiterminator sequence of the ribosomal RNA (rrn) operons. The chain is Transcription antitermination protein NusB from Pseudomonas fluorescens (strain ATCC BAA-477 / NRRL B-23932 / Pf-5).